A 446-amino-acid polypeptide reads, in one-letter code: Tubulin beta-1 chain (446 aa).

GTP-binding residues include glutamine 11, glutamate 69, serine 138, glycine 142, threonine 143, glycine 144, asparagine 204, and asparagine 226. Position 69 (glutamate 69) interacts with Mg(2+). A disordered region spans residues 422-446; the sequence is YQQYQDATADEEGEYEDEEEGDLQD. The segment covering 429 to 446 has biased composition (acidic residues); that stretch reads TADEEGEYEDEEEGDLQD.

The protein belongs to the tubulin family. In terms of assembly, dimer of alpha and beta chains. A typical microtubule is a hollow water-filled tube with an outer diameter of 25 nm and an inner diameter of 15 nM. Alpha-beta heterodimers associate head-to-tail to form protofilaments running lengthwise along the microtubule wall with the beta-tubulin subunit facing the microtubule plus end conferring a structural polarity. Microtubules usually have 13 protofilaments but different protofilament numbers can be found in some organisms and specialized cells. Mg(2+) serves as cofactor. Found in areas of rapidly dividing tissues.

Its subcellular location is the cytoplasm. The protein resides in the cytoskeleton. Its function is as follows. Tubulin is the major constituent of microtubules, a cylinder consisting of laterally associated linear protofilaments composed of alpha- and beta-tubulin heterodimers. Microtubules grow by the addition of GTP-tubulin dimers to the microtubule end, where a stabilizing cap forms. Below the cap, tubulin dimers are in GDP-bound state, owing to GTPase activity of alpha-tubulin. In Zea mays (Maize), this protein is Tubulin beta-1 chain (TUBB1).